A 210-amino-acid polypeptide reads, in one-letter code: Na(+)-translocating NADH-quinone reductase subunit D (210 aa).

6 consecutive transmembrane segments (helical) span residues 14-34 (PIIN…ALAV), 42-62 (LVMT…ISLI), 72-92 (IIVQ…VLQA), 96-116 (AISK…IVMG), 131-151 (FMDG…VGVV), and 178-198 (NGLL…IWLI).

It belongs to the NqrDE/RnfAE family. Composed of six subunits; NqrA, NqrB, NqrC, NqrD, NqrE and NqrF.

The protein localises to the cell inner membrane. The enzyme catalyses a ubiquinone + n Na(+)(in) + NADH + H(+) = a ubiquinol + n Na(+)(out) + NAD(+). Its function is as follows. NQR complex catalyzes the reduction of ubiquinone-1 to ubiquinol by two successive reactions, coupled with the transport of Na(+) ions from the cytoplasm to the periplasm. NqrA to NqrE are probably involved in the second step, the conversion of ubisemiquinone to ubiquinol. The polypeptide is Na(+)-translocating NADH-quinone reductase subunit D (Shewanella frigidimarina (strain NCIMB 400)).